The chain runs to 549 residues: Thermosome subunit alpha (549 aa).

The disordered stretch occupies residues 529–549 (EGRQGAECPPNGCMGGMDMRM).

It belongs to the TCP-1 chaperonin family. Forms a Heterooligomeric complex of two stacked eight-membered rings.

Its function is as follows. Molecular chaperone; binds unfolded polypeptides in vitro, and has a weak ATPase activity. This Thermococcus sp. (strain KS-8) protein is Thermosome subunit alpha (thsA).